The chain runs to 131 residues: Transcription antitermination protein NusB (131 aa).

This sequence belongs to the NusB family.

Involved in transcription antitermination. Required for transcription of ribosomal RNA (rRNA) genes. Binds specifically to the boxA antiterminator sequence of the ribosomal RNA (rrn) operons. The protein is Transcription antitermination protein NusB of Caldicellulosiruptor saccharolyticus (strain ATCC 43494 / DSM 8903 / Tp8T 6331).